Reading from the N-terminus, the 236-residue chain is Serine/arginine-rich SC35-like splicing factor SCL28 (236 aa).

Disordered regions lie at residues 1–53 and 124–219; these read MARA…LIRN and EENR…RVLT. The segment covering 14-43 has biased composition (basic and acidic residues); the sequence is RPRDRSPPRERKGYDDNRLRERPSSRDHES. The RRM domain occupies 47 to 125; sequence SGLLIRNLPL…REIAIVFAEE (79 aa). Residues 149-176 show a composition bias toward basic residues; that stretch reads TSHRSPRRRYRSHSRSRSPPRRESRHSK. Ser-184 carries the phosphoserine modification. The segment covering 199–217 has biased composition (basic and acidic residues); sequence RNEREYKSRNCRSPREERV.

This sequence belongs to the splicing factor SR family. SCL subfamily. As to quaternary structure, component of the spliceosome. Interacts with RS2Z33, CYP59, CYP63 and CYP95.

It localises to the nucleus speckle. Involved in intron recognition and spliceosome assembly. Probably active at the 5' splice sites. The protein is Serine/arginine-rich SC35-like splicing factor SCL28 (SCL28) of Arabidopsis thaliana (Mouse-ear cress).